We begin with the raw amino-acid sequence, 482 residues long: uncharacterized protein (482 aa).

12 helical membrane-spanning segments follow: residues 40-57 (LDWY…LSFL), 83-103 (AAVS…VLLV), 109-129 (HYYL…TCFV), 140-160 (LLLG…ISMT), 170-190 (LAYL…IATG), 205-225 (WLYI…LFCL), 278-298 (VIQF…PSIL), 311-331 (YMSV…CLLS), 338-358 (GWFI…LLAT), 366-386 (VATY…ITWI), 399-418 (ALGC…GQVY), and 428-448 (GFAL…RFYL).

The protein belongs to the major facilitator superfamily. Allantoate permease family.

The protein localises to the endoplasmic reticulum. The protein resides in the membrane. This is an uncharacterized protein from Schizosaccharomyces pombe (strain 972 / ATCC 24843) (Fission yeast).